The sequence spans 243 residues: Urease accessory protein UreF 2 (243 aa).

It belongs to the UreF family. In terms of assembly, ureD, UreF and UreG form a complex that acts as a GTP-hydrolysis-dependent molecular chaperone, activating the urease apoprotein by helping to assemble the nickel containing metallocenter of UreC. The UreE protein probably delivers the nickel.

It is found in the cytoplasm. Its function is as follows. Required for maturation of urease via the functional incorporation of the urease nickel metallocenter. The chain is Urease accessory protein UreF 2 from Brucella suis (strain ATCC 23445 / NCTC 10510).